The primary structure comprises 269 residues: ATP synthase subunit delta (269 aa).

The protein belongs to the ATPase delta chain family. F-type ATPases have 2 components, F(1) - the catalytic core - and F(0) - the membrane proton channel. F(1) has five subunits: alpha(3), beta(3), gamma(1), delta(1), epsilon(1). F(0) has three main subunits: a(1), b(2) and c(10-14). The alpha and beta chains form an alternating ring which encloses part of the gamma chain. F(1) is attached to F(0) by a central stalk formed by the gamma and epsilon chains, while a peripheral stalk is formed by the delta and b chains.

The protein localises to the cell membrane. F(1)F(0) ATP synthase produces ATP from ADP in the presence of a proton or sodium gradient. F-type ATPases consist of two structural domains, F(1) containing the extramembraneous catalytic core and F(0) containing the membrane proton channel, linked together by a central stalk and a peripheral stalk. During catalysis, ATP synthesis in the catalytic domain of F(1) is coupled via a rotary mechanism of the central stalk subunits to proton translocation. Its function is as follows. This protein is part of the stalk that links CF(0) to CF(1). It either transmits conformational changes from CF(0) to CF(1) or is implicated in proton conduction. The sequence is that of ATP synthase subunit delta from Nocardia farcinica (strain IFM 10152).